The following is a 373-amino-acid chain: Superinfection exclusion protein (373 aa).

Residues 1–15 (MIVLLILSLACTAFT) form the signal peptide.

The protein belongs to the serpin family. Orthopoxvirus OPG040 subfamily. In terms of assembly, interacts with A56 protein.

Its subcellular location is the virion membrane. It is found in the host cell membrane. Functionally, prevents cell to cell fusion via its interaction with A56 protein. The A56-K2 complex associates with components of the entry fusion complex (EFC) presumably to avoid superinfection and syncytium formation. This Homo sapiens (Human) protein is Superinfection exclusion protein (OPG040).